Consider the following 130-residue polypeptide: Small ribosomal subunit protein uS8 (130 aa).

This sequence belongs to the universal ribosomal protein uS8 family.

The sequence is that of Small ribosomal subunit protein uS8 (rps22) from Agaricus bisporus (White button mushroom).